The primary structure comprises 91 residues: Probable Thioredoxin (91 aa).

Positions methionine 1–serine 91 constitute a Glutaredoxin domain. A disulfide bridge connects residues cysteine 12 and cysteine 15.

The protein belongs to the glutaredoxin family.

It is found in the cytoplasm. In terms of biological role, acts to maintain redox homeostasis; functions as a protein disulfide reductase. The sequence is that of Probable Thioredoxin from Archaeoglobus fulgidus (strain ATCC 49558 / DSM 4304 / JCM 9628 / NBRC 100126 / VC-16).